The chain runs to 339 residues: Dihydroorotate dehydrogenase (quinone) (339 aa).

FMN-binding positions include 64-68 (AGADK) and Thr-88. Residue Lys-68 participates in substrate binding. 113–117 (NRNGF) is a binding site for substrate. FMN is bound by residues Asn-141 and Asn-174. Asn-174 is a binding site for substrate. Ser-177 functions as the Nucleophile in the catalytic mechanism. Asn-179 is a substrate binding site. Positions 219 and 247 each coordinate FMN. Residue 248 to 249 (NT) participates in substrate binding. Residues Gly-270, Gly-299, and 320-321 (YS) contribute to the FMN site.

Belongs to the dihydroorotate dehydrogenase family. Type 2 subfamily. As to quaternary structure, monomer. The cofactor is FMN.

The protein localises to the cell membrane. The enzyme catalyses (S)-dihydroorotate + a quinone = orotate + a quinol. It participates in pyrimidine metabolism; UMP biosynthesis via de novo pathway; orotate from (S)-dihydroorotate (quinone route): step 1/1. Its function is as follows. Catalyzes the conversion of dihydroorotate to orotate with quinone as electron acceptor. This is Dihydroorotate dehydrogenase (quinone) (pyrD) from Haemophilus influenzae (strain ATCC 51907 / DSM 11121 / KW20 / Rd).